We begin with the raw amino-acid sequence, 365 residues long: Probable dual-specificity RNA methyltransferase RlmN (365 aa).

Glu-108 acts as the Proton acceptor in catalysis. A Radical SAM core domain is found at 114–347 (HNYGNSVCVT…VTIRREHGHD (234 aa)). Cys-121 and Cys-352 are disulfide-bonded. [4Fe-4S] cluster is bound by residues Cys-128, Cys-132, and Cys-135. Residues 178-179 (GE), Ser-210, 233-235 (SLH), and Asn-309 contribute to the S-adenosyl-L-methionine site. The active-site S-methylcysteine intermediate is Cys-352.

This sequence belongs to the radical SAM superfamily. RlmN family. Requires [4Fe-4S] cluster as cofactor.

Its subcellular location is the cytoplasm. The catalysed reaction is adenosine(2503) in 23S rRNA + 2 reduced [2Fe-2S]-[ferredoxin] + 2 S-adenosyl-L-methionine = 2-methyladenosine(2503) in 23S rRNA + 5'-deoxyadenosine + L-methionine + 2 oxidized [2Fe-2S]-[ferredoxin] + S-adenosyl-L-homocysteine. The enzyme catalyses adenosine(37) in tRNA + 2 reduced [2Fe-2S]-[ferredoxin] + 2 S-adenosyl-L-methionine = 2-methyladenosine(37) in tRNA + 5'-deoxyadenosine + L-methionine + 2 oxidized [2Fe-2S]-[ferredoxin] + S-adenosyl-L-homocysteine. Specifically methylates position 2 of adenine 2503 in 23S rRNA and position 2 of adenine 37 in tRNAs. The protein is Probable dual-specificity RNA methyltransferase RlmN of Geobacillus kaustophilus (strain HTA426).